A 311-amino-acid polypeptide reads, in one-letter code: Cytochrome f (311 aa).

An N-terminal signal peptide occupies residues 1–27 (MRRHLSLVLGSLVIGLALLIAPGASWA). Residues Y28, C48, C51, and H52 each contribute to the heme site. A helical transmembrane segment spans residues 277 to 297 (IYGLLAFFAAVAIAQIMLVLK).

This sequence belongs to the cytochrome f family. As to quaternary structure, the 4 large subunits of the cytochrome b6-f complex are cytochrome b6, subunit IV (17 kDa polypeptide, PetD), cytochrome f and the Rieske protein, while the 4 small subunits are PetG, PetL, PetM and PetN. The complex functions as a dimer. Heme serves as cofactor.

The protein resides in the cellular thylakoid membrane. Its function is as follows. Component of the cytochrome b6-f complex, which mediates electron transfer between photosystem II (PSII) and photosystem I (PSI), cyclic electron flow around PSI, and state transitions. This chain is Cytochrome f, found in Synechococcus sp. (strain CC9902).